Reading from the N-terminus, the 301-residue chain is 3-methyl-2-oxobutanoate hydroxymethyltransferase (301 aa).

Positions 1–12 are enriched in polar residues; the sequence is MAPSNLPESTTP. The interval 1-24 is disordered; the sequence is MAPSNLPESTTPAEVPAPYGTGPA. Residues Asp82 and Asp121 each contribute to the Mg(2+) site. 3-methyl-2-oxobutanoate-binding positions include 82–83, Asp121, and Lys151; that span reads DS. Mg(2+) is bound at residue Glu153. Glu219 (proton acceptor) is an active-site residue.

This sequence belongs to the PanB family. Homodecamer; pentamer of dimers. The cofactor is Mg(2+).

Its subcellular location is the cytoplasm. It catalyses the reaction 3-methyl-2-oxobutanoate + (6R)-5,10-methylene-5,6,7,8-tetrahydrofolate + H2O = 2-dehydropantoate + (6S)-5,6,7,8-tetrahydrofolate. The protein operates within cofactor biosynthesis; (R)-pantothenate biosynthesis; (R)-pantoate from 3-methyl-2-oxobutanoate: step 1/2. Catalyzes the reversible reaction in which hydroxymethyl group from 5,10-methylenetetrahydrofolate is transferred onto alpha-ketoisovalerate to form ketopantoate. This Paenarthrobacter aurescens (strain TC1) protein is 3-methyl-2-oxobutanoate hydroxymethyltransferase.